The chain runs to 296 residues: Transposase for insertion sequence element IST2 (296 aa).

This sequence belongs to the transposase mutator family.

Its function is as follows. Required for the transposition of the insertion element. This is Transposase for insertion sequence element IST2 from Acidithiobacillus ferrooxidans (Thiobacillus ferrooxidans).